Here is a 99-residue protein sequence, read N- to C-terminus: Small ribosomal subunit protein cS23 (99 aa).

This sequence belongs to the chloroplast-specific ribosomal protein cS23 family. As to quaternary structure, part of the 30S ribosomal subunit.

It localises to the plastid. The protein localises to the chloroplast. Functionally, probably a ribosomal protein or a ribosome-associated protein. This Gracilaria tenuistipitata var. liui (Red alga) protein is Small ribosomal subunit protein cS23.